A 97-amino-acid chain; its full sequence is Large ribosomal subunit protein uL23 (97 aa).

This sequence belongs to the universal ribosomal protein uL23 family. In terms of assembly, part of the 50S ribosomal subunit. Contacts protein L29, and trigger factor when it is bound to the ribosome.

One of the early assembly proteins it binds 23S rRNA. One of the proteins that surrounds the polypeptide exit tunnel on the outside of the ribosome. Forms the main docking site for trigger factor binding to the ribosome. This chain is Large ribosomal subunit protein uL23, found in Rhizobium rhizogenes (strain K84 / ATCC BAA-868) (Agrobacterium radiobacter).